Here is a 315-residue protein sequence, read N- to C-terminus: Alpha- and gamma-adaptin-binding protein p34 (315 aa).

The interval 197 to 234 is disordered; the sequence is IGSADPCHPEQPHLPAADSTESLSDHRGGASNTTDAQV. Residues serine 310 and serine 311 each carry the phosphoserine modification.

Associated with AP-1 and AP-2 complexes. As to expression, widely expressed, including in skin and keratinocytes, with highest levels in adrenal gland, rectum and thymus.

The protein resides in the cytoplasm. The protein localises to the cytosol. In terms of biological role, may be involved in endocytic recycling of growth factor receptors such as EGFR. This is Alpha- and gamma-adaptin-binding protein p34 (AAGAB) from Homo sapiens (Human).